The chain runs to 200 residues: Holliday junction branch migration complex subunit RuvA (200 aa).

Positions Met1–Ser64 are domain I. A domain II region spans residues Gly65–Ser143. Residues Pro144–Asp154 form a flexible linker region. Residues Asp154–Ser200 form a domain III region.

Belongs to the RuvA family. In terms of assembly, homotetramer. Forms an RuvA(8)-RuvB(12)-Holliday junction (HJ) complex. HJ DNA is sandwiched between 2 RuvA tetramers; dsDNA enters through RuvA and exits via RuvB. An RuvB hexamer assembles on each DNA strand where it exits the tetramer. Each RuvB hexamer is contacted by two RuvA subunits (via domain III) on 2 adjacent RuvB subunits; this complex drives branch migration. In the full resolvosome a probable DNA-RuvA(4)-RuvB(12)-RuvC(2) complex forms which resolves the HJ.

The protein localises to the cytoplasm. Functionally, the RuvA-RuvB-RuvC complex processes Holliday junction (HJ) DNA during genetic recombination and DNA repair, while the RuvA-RuvB complex plays an important role in the rescue of blocked DNA replication forks via replication fork reversal (RFR). RuvA specifically binds to HJ cruciform DNA, conferring on it an open structure. The RuvB hexamer acts as an ATP-dependent pump, pulling dsDNA into and through the RuvAB complex. HJ branch migration allows RuvC to scan DNA until it finds its consensus sequence, where it cleaves and resolves the cruciform DNA. This chain is Holliday junction branch migration complex subunit RuvA, found in Pelodictyon phaeoclathratiforme (strain DSM 5477 / BU-1).